The chain runs to 198 residues: Small ribosomal subunit protein uS5 (198 aa).

Positions 46–109 (LEDDVLEISM…NNAKLNIFKV (64 aa)) constitute an S5 DRBM domain.

It belongs to the universal ribosomal protein uS5 family. As to quaternary structure, part of the 30S ribosomal subunit. Contacts protein S4.

Functionally, with S4 and S12 plays an important role in translational accuracy. This Archaeoglobus fulgidus (strain ATCC 49558 / DSM 4304 / JCM 9628 / NBRC 100126 / VC-16) protein is Small ribosomal subunit protein uS5.